The chain runs to 74 residues: Antitoxin VapB39 (74 aa).

Its function is as follows. Antitoxin component of a type II toxin-antitoxin (TA) system. The sequence is that of Antitoxin VapB39 (vapB39) from Mycobacterium tuberculosis (strain CDC 1551 / Oshkosh).